We begin with the raw amino-acid sequence, 279 residues long: MSRKIVEFRNVSFRYDEEGPWVLKNCSFEIYEDEWLAIIGHNGSGKSTIAKLLNGLLFPQEGEIYIDGIKVDENSIWDIRKEVGMVFQNPDNQFVGATVQDDVAFGMENRGIPREIMKKRIDETLQAVRMQDYLLTEPHRLSGGQKQRVAIASVLAISPKILILDEATAMLDPVGRKEIMQTVNSIQDSQGLSLITITHDLKEITRADRVIVLNNGERWDEATPSQLFKRKDALREIGLDVPFVAHLSDAFRNNGITIEHSPLSHEQLLEELWTYHSKM.

The ABC transporter domain maps to 6 to 240 (VEFRNVSFRY…KDALREIGLD (235 aa)). 40 to 47 (GHNGSGKS) contributes to the ATP binding site.

It belongs to the ABC transporter superfamily. Energy-coupling factor EcfA family. In terms of assembly, forms a stable energy-coupling factor (ECF) transporter complex composed of 2 membrane-embedded substrate-binding proteins (S component), 2 ATP-binding proteins (A component) and 2 transmembrane proteins (T component).

The protein resides in the cell membrane. Its function is as follows. ATP-binding (A) component of a common energy-coupling factor (ECF) ABC-transporter complex. Unlike classic ABC transporters this ECF transporter provides the energy necessary to transport a number of different substrates. The sequence is that of Energy-coupling factor transporter ATP-binding protein EcfA1 from Oceanobacillus iheyensis (strain DSM 14371 / CIP 107618 / JCM 11309 / KCTC 3954 / HTE831).